The following is a 625-amino-acid chain: Putative xanthine/uracil permease C887.17 (625 aa).

Helical transmembrane passes span 49-69 (AGLT…TILV), 107-127 (AAIS…PVGM), 154-174 (EALL…VIGL), 192-212 (AGIG…LGVI), 246-263 (MWVG…LMMY), 328-348 (FAIA…GTLY), 369-389 (VAYI…CSPV), 406-426 (GILG…APIF), 429-449 (IPVW…MKST), and 465-485 (ITIA…AGII). Positions 595 to 625 (EAVGESESFSNRQQDFRTPYAGIDMDTDDRI) are disordered.

It belongs to the nucleobase:cation symporter-2 (NCS2) (TC 2.A.40) family. Azg-like subfamily.

Its subcellular location is the golgi apparatus membrane. The chain is Putative xanthine/uracil permease C887.17 from Schizosaccharomyces pombe (strain 972 / ATCC 24843) (Fission yeast).